Consider the following 337-residue polypeptide: Glyceraldehyde-3-phosphate dehydrogenase (337 aa).

Residues 12–13 (RI), Asp34, and Lys79 each bind NAD(+). D-glyceraldehyde 3-phosphate is bound by residues 150 to 152 (SCT), Thr181, 210 to 211 (TG), and Arg233. Residue Cys151 is the Nucleophile of the active site. Position 315 (Asn315) interacts with NAD(+).

Belongs to the glyceraldehyde-3-phosphate dehydrogenase family. In terms of assembly, homotetramer.

It is found in the cytoplasm. The catalysed reaction is D-glyceraldehyde 3-phosphate + phosphate + NAD(+) = (2R)-3-phospho-glyceroyl phosphate + NADH + H(+). It participates in carbohydrate degradation; glycolysis; pyruvate from D-glyceraldehyde 3-phosphate: step 1/5. This chain is Glyceraldehyde-3-phosphate dehydrogenase (GPD1), found in Cochliobolus heterostrophus (Southern corn leaf blight fungus).